The chain runs to 163 residues: Small ribosomal subunit protein uS5 (163 aa).

An S5 DRBM domain is found at 8–71 (LIEKIVYLNR…EKARKEMISV (64 aa)).

This sequence belongs to the universal ribosomal protein uS5 family. In terms of assembly, part of the 30S ribosomal subunit. Contacts proteins S4 and S8.

With S4 and S12 plays an important role in translational accuracy. Its function is as follows. Located at the back of the 30S subunit body where it stabilizes the conformation of the head with respect to the body. This chain is Small ribosomal subunit protein uS5, found in Maridesulfovibrio salexigens (strain ATCC 14822 / DSM 2638 / NCIMB 8403 / VKM B-1763) (Desulfovibrio salexigens).